Consider the following 75-residue polypeptide: Putative snRNP Sm-like protein (75 aa).

A Sm domain is found at 4–75 (RPLDVIHRSL…NVLAISPTEE (72 aa)).

Belongs to the snRNP Sm proteins family.

The chain is Putative snRNP Sm-like protein from Pyrococcus horikoshii (strain ATCC 700860 / DSM 12428 / JCM 9974 / NBRC 100139 / OT-3).